The primary structure comprises 551 residues: MDARTHRRAAGTPRALAERAGRRCCLGWDFSTQQVKVVAVDAELNVFYEDSVHFDRDLPEFGTQGGVHVHKDRLTVTSPVLMWVQALDLILGKMKSSGFDFSQVLALSGAGQQHGSVYWKTGASLALSSLSPALPLHQQLQSCFSISDCPIWMDSSTTAQCHQLEAAVGGAQALSCLTGSRAYERFTGNQIAKLFQKNPEAYSHSERISLVSSFAASLFLGGYSPIDYSDGSGMNLLQIQEKVWSQACLDVCAPHLEEKLGSPVPSCSVVGTISSYYVQRYGFPPGCKVVAFSGDNPASLAGMRLEEGDIAVSLGTSDTLFLWLQKPMPALEGHIFCNPVDPQHYMALLCFKNGSLMREKIRDESASCSWNKFSKALKSTAMGNNGNLGFYFDVMEITPEIIGRHRFNAENMEVSAFPGDVEIRALIEGQFMAKRIHAEGLGYRVMPKTKILATGGASHNKDILQVLADVFGAPVYVIDTTSSACVGSAYRAFHGLAGGTGVAFSEVVKSAPQPSLAATPNPGASQVYAALLPRYSALEQRILSTAQRPLE.

Substrate is bound by residues His114, Arg185, Asp295, and Asn296. ATP-binding positions include Trp370, 456 to 457, and Asn460; that span reads GA.

This sequence belongs to the FGGY kinase family. As to quaternary structure, monomer.

The catalysed reaction is D-xylulose + ATP = D-xylulose 5-phosphate + ADP + H(+). Phosphorylates D-xylulose to produce D-xylulose 5-phosphate, a molecule that may play an important role in the regulation of glucose metabolism and lipogenesis. The chain is Xylulose kinase (Xylb) from Mus musculus (Mouse).